The sequence spans 447 residues: Multicopper oxidase mco (447 aa).

Over residues 1–25 (MMDMKENDQKRNDMMDMKSHDERKN) the composition is skewed to basic and acidic residues. A disordered region spans residues 1 to 43 (MMDMKENDQKRNDMMDMKSHDERKNLNSSQGKNEITFPKVLDP). Cu cation contacts are provided by His-107, His-109, His-147, His-149, His-375, His-378, His-380, His-428, Cys-429, His-430, His-434, and Met-439.

The protein belongs to the multicopper oxidase family. The cofactor is Cu cation.

It is found in the cytoplasm. Its function is as follows. May be involved in copper homeostasis and oxidative stress response. Oxidizes the substrate 3,3'-dimethoxybenzidine in vitro. Also possesses low levels of phenoloxidase and ferroxidase activities. The sequence is that of Multicopper oxidase mco (mco) from Staphylococcus aureus.